The sequence spans 488 residues: Probable cytosol aminopeptidase (488 aa).

2 residues coordinate Mn(2+): Lys-253 and Asp-258. Lys-265 is a catalytic residue. Residues Asp-276, Asp-335, and Glu-337 each coordinate Mn(2+). Residue Arg-339 is part of the active site.

Belongs to the peptidase M17 family. Mn(2+) is required as a cofactor.

It is found in the cytoplasm. The catalysed reaction is Release of an N-terminal amino acid, Xaa-|-Yaa-, in which Xaa is preferably Leu, but may be other amino acids including Pro although not Arg or Lys, and Yaa may be Pro. Amino acid amides and methyl esters are also readily hydrolyzed, but rates on arylamides are exceedingly low.. It catalyses the reaction Release of an N-terminal amino acid, preferentially leucine, but not glutamic or aspartic acids.. Functionally, presumably involved in the processing and regular turnover of intracellular proteins. Catalyzes the removal of unsubstituted N-terminal amino acids from various peptides. The sequence is that of Probable cytosol aminopeptidase from Dinoroseobacter shibae (strain DSM 16493 / NCIMB 14021 / DFL 12).